The following is a 252-amino-acid chain: Putative teichuronic acid biosynthesis glycosyltransferase TuaG (252 aa).

The protein belongs to the glycosyltransferase 2 family.

It participates in cell wall biogenesis; teichuronic acid biosynthesis. The chain is Putative teichuronic acid biosynthesis glycosyltransferase TuaG (tuaG) from Bacillus subtilis (strain 168).